Consider the following 199-residue polypeptide: SCO2-like protein RC0042 (199 aa).

It belongs to the SCO1/2 family.

The protein is SCO2-like protein RC0042 of Rickettsia conorii (strain ATCC VR-613 / Malish 7).